A 142-amino-acid chain; its full sequence is Fluoride-specific ion channel FluC 1 (142 aa).

The next 4 membrane-spanning stretches (helical) occupy residues 17-37 (AWVSAGSVVGGLTRYLVGLAL), 42-62 (GFPFATLFINATGSLIIGFYA), 80-100 (FVMTGFCGGYTTFSAFSLETF), and 109-129 (YIALAYVASSVVCWLVSVWLG). Residues glycine 87 and threonine 90 each coordinate Na(+).

It belongs to the fluoride channel Fluc/FEX (TC 1.A.43) family.

The protein localises to the cell inner membrane. The catalysed reaction is fluoride(in) = fluoride(out). Na(+) is not transported, but it plays an essential structural role and its presence is essential for fluoride channel function. Functionally, fluoride-specific ion channel. Important for reducing fluoride concentration in the cell, thus reducing its toxicity. This Bradyrhizobium diazoefficiens (strain JCM 10833 / BCRC 13528 / IAM 13628 / NBRC 14792 / USDA 110) protein is Fluoride-specific ion channel FluC 1.